A 189-amino-acid polypeptide reads, in one-letter code: MALSFSLLMAVLVLSYKSICSLGCDLPQTHSLGNRRALILLAQMGRISPFSCLKDRHDFGFPQEEFDGNQFQKAQAISVLHEMIQQTFNLFSTKDSSATWEQSLLEKFSTELNQQLNDLEACVIQEVGVEETPLMNVDSILAVKKYFQRITLYLTEKKYSPCAWEVVRAEIMRSFSLSKIFQERLRRKE.

The N-terminal stretch at 1–23 (MALSFSLLMAVLVLSYKSICSLG) is a signal peptide. Intrachain disulfides connect Cys24–Cys122 and Cys52–Cys162.

It belongs to the alpha/beta interferon family.

The protein resides in the secreted. Its function is as follows. Produced by macrophages, IFN-alpha have antiviral activities. Interferon stimulates the production of two enzymes: a protein kinase and an oligoadenylate synthetase. This chain is Interferon alpha-21 (IFNA21), found in Homo sapiens (Human).